Consider the following 71-residue polypeptide: Large ribosomal subunit protein bL31 (71 aa).

Zn(2+) is bound by residues Cys16, Cys18, Cys37, and Cys40.

Belongs to the bacterial ribosomal protein bL31 family. Type A subfamily. In terms of assembly, part of the 50S ribosomal subunit. Zn(2+) serves as cofactor.

Binds the 23S rRNA. The chain is Large ribosomal subunit protein bL31 from Mannheimia succiniciproducens (strain KCTC 0769BP / MBEL55E).